The sequence spans 112 residues: Large ribosomal subunit protein bL17 (112 aa).

The protein belongs to the bacterial ribosomal protein bL17 family. In terms of assembly, part of the 50S ribosomal subunit. Contacts protein L32.

This Moorella thermoacetica (strain ATCC 39073 / JCM 9320) protein is Large ribosomal subunit protein bL17.